The sequence spans 265 residues: UDP-N-acetylenolpyruvoylglucosamine reductase (265 aa).

An FAD-binding PCMH-type domain is found at 15-169 (GVGGPAELWT…TRVRLKLKER (155 aa)). Arg149 is an active-site residue. The segment at 182-203 (DRARKGQPKRKSAGCAFKNPPG) is disordered. Cys196 (proton donor) is an active-site residue.

This sequence belongs to the MurB family. FAD serves as cofactor.

It localises to the cytoplasm. The enzyme catalyses UDP-N-acetyl-alpha-D-muramate + NADP(+) = UDP-N-acetyl-3-O-(1-carboxyvinyl)-alpha-D-glucosamine + NADPH + H(+). It functions in the pathway cell wall biogenesis; peptidoglycan biosynthesis. In terms of biological role, cell wall formation. In Thermus thermophilus (strain ATCC BAA-163 / DSM 7039 / HB27), this protein is UDP-N-acetylenolpyruvoylglucosamine reductase.